A 184-amino-acid chain; its full sequence is MSWRSDHICIELIAGSRKPSNVCWAFILFLGSLGFLLVGTSSYLGRNFIPFFPSQQIIFFPQGIVMSFYGIAGLFISSYLWCTISWNVGSGYDRFDIKEGIVCIFRWGFPGKNRRIFLRFLMKDIQSIRIEVKEGIYARRVLYMEIRGQGSIPLTRTDENLTLREIEQKAAELAYFLRVPIEVF.

2 consecutive transmembrane segments (helical) span residues 22–42 (VCWA…GTSS) and 57–77 (IIFF…LFIS).

This sequence belongs to the Ycf4 family.

It is found in the plastid. It localises to the chloroplast thylakoid membrane. Functionally, seems to be required for the assembly of the photosystem I complex. The sequence is that of Photosystem I assembly protein Ycf4 from Morus indica (Mulberry).